A 185-amino-acid chain; its full sequence is Peptidyl-tRNA hydrolase (185 aa).

Y14 contacts tRNA. Catalysis depends on H19, which acts as the Proton acceptor. Y64, N66, and N112 together coordinate tRNA.

Belongs to the PTH family. Monomer.

It is found in the cytoplasm. It catalyses the reaction an N-acyl-L-alpha-aminoacyl-tRNA + H2O = an N-acyl-L-amino acid + a tRNA + H(+). Its function is as follows. Hydrolyzes ribosome-free peptidyl-tRNAs (with 1 or more amino acids incorporated), which drop off the ribosome during protein synthesis, or as a result of ribosome stalling. Catalyzes the release of premature peptidyl moieties from peptidyl-tRNA molecules trapped in stalled 50S ribosomal subunits, and thus maintains levels of free tRNAs and 50S ribosomes. The chain is Peptidyl-tRNA hydrolase from Lactobacillus helveticus (strain DPC 4571).